A 508-amino-acid polypeptide reads, in one-letter code: Probable cytochrome P450 6d5 (508 aa).

Cys453 is a heme binding site.

It belongs to the cytochrome P450 family. Heme is required as a cofactor.

It localises to the endoplasmic reticulum membrane. The protein localises to the microsome membrane. May be involved in the metabolism of insect hormones and in the breakdown of synthetic insecticides. This chain is Probable cytochrome P450 6d5 (Cyp6d5), found in Drosophila melanogaster (Fruit fly).